The chain runs to 234 residues: UDP-2,3-diacylglucosamine hydrolase (234 aa).

Mn(2+) contacts are provided by Asp9, His11, Asp42, Asn80, and His115. Residue 80-81 (NR) participates in substrate binding. Substrate-binding residues include Asp123, Ser161, Lys165, Lys168, and His196. The Mn(2+) site is built by His196 and His198.

It belongs to the LpxH family. Mn(2+) is required as a cofactor.

It localises to the cell inner membrane. The enzyme catalyses UDP-2-N,3-O-bis[(3R)-3-hydroxytetradecanoyl]-alpha-D-glucosamine + H2O = 2-N,3-O-bis[(3R)-3-hydroxytetradecanoyl]-alpha-D-glucosaminyl 1-phosphate + UMP + 2 H(+). Its pathway is glycolipid biosynthesis; lipid IV(A) biosynthesis; lipid IV(A) from (3R)-3-hydroxytetradecanoyl-[acyl-carrier-protein] and UDP-N-acetyl-alpha-D-glucosamine: step 4/6. In terms of biological role, hydrolyzes the pyrophosphate bond of UDP-2,3-diacylglucosamine to yield 2,3-diacylglucosamine 1-phosphate (lipid X) and UMP by catalyzing the attack of water at the alpha-P atom. Involved in the biosynthesis of lipid A, a phosphorylated glycolipid that anchors the lipopolysaccharide to the outer membrane of the cell. The protein is UDP-2,3-diacylglucosamine hydrolase of Haemophilus ducreyi (strain 35000HP / ATCC 700724).